A 1132-amino-acid polypeptide reads, in one-letter code: Protein sel-1 homolog 3 (1132 aa).

The segment at 1–24 (MQRRGAGLGWPRQQQQQPPPLAVG) is disordered. 3 N-linked (GlcNAc...) asparagine glycosylation sites follow: Asn-201, Asn-382, and Asn-527. 7 Sel1-like repeats span residues 575–609 (YLAV…RLSS), 611–647 (NLGY…DQHT), 694–730 (RLAQ…PALI), 732–767 (DYAI…QAVN), 768–800 (GLGW…DASY), 801–839 (NLGV…EGTL), and 840–877 (WCSL…LGHV). Ser-608 carries the post-translational modification Phosphoserine. Residue Asn-937 is glycosylated (N-linked (GlcNAc...) asparagine). Residues 952–988 (KMGDLYYYGHQNQSQDLELSVQMYAQAALDGDSQGFF) form a Sel1-like 8 repeat. The helical transmembrane segment at 1057–1077 (ILHSALIYFLGTFLLSILIAW) threads the bilayer. The tract at residues 1087 to 1132 (ASDPPPRPSQASPDTATSTASPAVTPAADASDQDQPTVTNNPEPRG) is disordered. The segment covering 1097-1116 (ASPDTATSTASPAVTPAADA) has biased composition (low complexity). A compositionally biased stretch (polar residues) spans 1119–1132 (QDQPTVTNNPEPRG).

It is found in the membrane. The sequence is that of Protein sel-1 homolog 3 (SEL1L3) from Homo sapiens (Human).